Here is a 172-residue protein sequence, read N- to C-terminus: MILRRVFIAIGCVLFSPLSQANSSLGEVNIELRGNVVDFTCAVVAGDSNKSVNLGTWPTKQLHAAGDATQPVAFSLKLEGCPPGSASITFSGTPAPGTALLALADTAMAQKLAIEIRDGDQRRLPLEQASKAVDIDNNGNATLKFYANYIALADGVQPGLANADATFLINYN.

Residues 1-21 (MILRRVFIAIGCVLFSPLSQA) form the signal peptide. A disulfide bond links C41 and C81.

It belongs to the fimbrial protein family.

It is found in the fimbrium. The protein is Fimbrial-like protein FimF (fimF) of Salmonella typhimurium (strain LT2 / SGSC1412 / ATCC 700720).